The chain runs to 189 residues: Elongation factor P (189 aa).

An N6-(3,6-diaminohexanoyl)-5-hydroxylysine modification is found at lysine 34.

It belongs to the elongation factor P family. Post-translationally, may be beta-lysylated on the epsilon-amino group of Lys-34 by the combined action of EpmA and EpmB, and then hydroxylated on the C5 position of the same residue by EpmC (if this protein is present). Lysylation is critical for the stimulatory effect of EF-P on peptide-bond formation. The lysylation moiety may extend toward the peptidyltransferase center and stabilize the terminal 3-CCA end of the tRNA. Hydroxylation of the C5 position on Lys-34 may allow additional potential stabilizing hydrogen-bond interactions with the P-tRNA.

Its subcellular location is the cytoplasm. The protein operates within protein biosynthesis; polypeptide chain elongation. In terms of biological role, involved in peptide bond synthesis. Alleviates ribosome stalling that occurs when 3 or more consecutive Pro residues or the sequence PPG is present in a protein, possibly by augmenting the peptidyl transferase activity of the ribosome. Modification of Lys-34 is required for alleviation. The protein is Elongation factor P of Alcanivorax borkumensis (strain ATCC 700651 / DSM 11573 / NCIMB 13689 / SK2).